Consider the following 308-residue polypeptide: Taste receptor type 2 member 46 (308 aa).

Position 1 (Met1) is a topological domain, extracellular. A helical transmembrane segment spans residues 2-22 (ITFLSITFSILVGVIFVIGNF). At 23–46 (ANGFIALVNSIEWVKRQKISFADQ) the chain is on the cytoplasmic side. Residues 47–67 (ILTGLAVSRVGLLWVLLLHLY) traverse the membrane as a helical segment. Residues 68-86 (ATEFNLAFYSVEVRITAYN) lie on the Extracellular side of the membrane. Residues 87-107 (VWIVTNHFSNWLSTSLSMFYL) form a helical membrane-spanning segment. Topologically, residues 108 to 126 (LKIATFSNLIFLHLKRKVK) are cytoplasmic. Residues 127-147 (SVILVTLLGPLLFLVCHLFVM) traverse the membrane as a helical segment. Residues 148-178 (NMNHIVWRKEYEGNITWRIKLRSAMYLSNVT) are Extracellular-facing. Residues Asn161 and Asn176 are each glycosylated (N-linked (GlcNAc...) asparagine). The chain crosses the membrane as a helical span at residues 179 to 199 (VTMLANLIPLTLTLMSFLLLI). Residues 200–229 (CSLCKHLKKMQVHGKGSQDPSTKVHIKALQ) are Cytoplasmic-facing. Residues 230–250 (TVTSFLLLCAIYFLSMILSVW) traverse the membrane as a helical segment. The Extracellular portion of the chain corresponds to 251–258 (NFELEKKP). Residues 259–279 (VFMFCQAVIFSYPSTHPLILI) form a helical membrane-spanning segment. Over 280–308 (WGNKKLKQIFLSVLWNVRYWVKGQKPSSP) the chain is Cytoplasmic.

Belongs to the G-protein coupled receptor T2R family.

It localises to the membrane. The protein resides in the cell projection. It is found in the cilium membrane. Receptor that may play a role in the perception of bitterness and is gustducin-linked. May play a role in sensing the chemical composition of the gastrointestinal content. The activity of this receptor may stimulate alpha gustducin, mediate PLC-beta-2 activation and lead to the gating of TRPM5. In airway epithelial cells, binding of bitter compounds increases the intracellular calcium ion concentration and stimulates ciliary beat frequency. In Macaca mulatta (Rhesus macaque), this protein is Taste receptor type 2 member 46 (TAS2R46).